Reading from the N-terminus, the 312-residue chain is Ribosomal protein L11 methyltransferase (312 aa).

S-adenosyl-L-methionine contacts are provided by T162, G183, D205, and N248.

The protein belongs to the methyltransferase superfamily. PrmA family.

The protein localises to the cytoplasm. The catalysed reaction is L-lysyl-[protein] + 3 S-adenosyl-L-methionine = N(6),N(6),N(6)-trimethyl-L-lysyl-[protein] + 3 S-adenosyl-L-homocysteine + 3 H(+). In terms of biological role, methylates ribosomal protein L11. The chain is Ribosomal protein L11 methyltransferase from Bacillus cereus (strain G9842).